Consider the following 263-residue polypeptide: Energy-coupling factor transporter transmembrane protein EcfT (263 aa).

A run of 4 helical transmembrane segments spans residues 22–42 (IIFA…ATNI), 69–89 (ILFL…EGAV), 105–125 (LAII…LVTL), and 243–263 (TGLI…RGGF).

The protein belongs to the energy-coupling factor EcfT family. Forms a stable energy-coupling factor (ECF) transporter complex composed of 2 membrane-embedded substrate-binding proteins (S component), 2 ATP-binding proteins (A component) and 2 transmembrane proteins (T component). May be able to interact with more than 1 S component at a time.

It is found in the cell membrane. Functionally, transmembrane (T) component of an energy-coupling factor (ECF) ABC-transporter complex. Unlike classic ABC transporters this ECF transporter provides the energy necessary to transport a number of different substrates. The chain is Energy-coupling factor transporter transmembrane protein EcfT from Exiguobacterium sibiricum (strain DSM 17290 / CCUG 55495 / CIP 109462 / JCM 13490 / 255-15).